The chain runs to 92 residues: Small ribosomal subunit protein uS19c (92 aa).

The protein belongs to the universal ribosomal protein uS19 family.

It localises to the plastid. Its subcellular location is the chloroplast. Functionally, protein S19 forms a complex with S13 that binds strongly to the 16S ribosomal RNA. The chain is Small ribosomal subunit protein uS19c from Populus alba (White poplar).